A 114-amino-acid polypeptide reads, in one-letter code: MATEVKAIAKYVRTSPQKVRRILDQIRGKSYKEAVMLLSVMPYKACSIILKIVDSAAANAQVTKGFNKNKLIISKTFVDKGPTLKRFRPRAQGRGYKILKPTCHITVQVQDQSL.

Belongs to the universal ribosomal protein uL22 family. In terms of assembly, part of the 50S ribosomal subunit.

It localises to the plastid. It is found in the cyanelle. In terms of biological role, this protein binds specifically to 23S rRNA. The globular domain of the protein is located near the polypeptide exit tunnel on the outside of the subunit, while an extended beta-hairpin is found that lines the wall of the exit tunnel in the center of the 70S ribosome. This Cyanophora paradoxa protein is Large ribosomal subunit protein uL22c (rpl22).